The following is a 419-amino-acid chain: UPF0229 protein Tbd_1233 (419 aa).

The interval 85–108 (GDRIDRPAGEGGGGSGGSPDGEGM) is disordered. Positions 93 to 104 (GEGGGGSGGSPD) are enriched in gly residues.

The protein belongs to the UPF0229 family.

This chain is UPF0229 protein Tbd_1233, found in Thiobacillus denitrificans (strain ATCC 25259 / T1).